The following is a 265-amino-acid chain: Ribosomal RNA small subunit methyltransferase A (265 aa).

S-adenosyl-L-methionine contacts are provided by His11, Leu13, Gly38, Glu59, Asp83, and Asn100.

The protein belongs to the class I-like SAM-binding methyltransferase superfamily. rRNA adenine N(6)-methyltransferase family. RsmA subfamily.

Its subcellular location is the cytoplasm. It catalyses the reaction adenosine(1518)/adenosine(1519) in 16S rRNA + 4 S-adenosyl-L-methionine = N(6)-dimethyladenosine(1518)/N(6)-dimethyladenosine(1519) in 16S rRNA + 4 S-adenosyl-L-homocysteine + 4 H(+). Specifically dimethylates two adjacent adenosines (A1518 and A1519) in the loop of a conserved hairpin near the 3'-end of 16S rRNA in the 30S particle. May play a critical role in biogenesis of 30S subunits. The chain is Ribosomal RNA small subunit methyltransferase A from Thermosynechococcus vestitus (strain NIES-2133 / IAM M-273 / BP-1).